Reading from the N-terminus, the 332-residue chain is Glycerol-3-phosphate dehydrogenase [NAD(P)+] (332 aa).

Residues Trp-11, Arg-30, and Lys-108 each contribute to the NADPH site. Lys-108, Gly-137, and Ser-139 together coordinate sn-glycerol 3-phosphate. Residue Ala-141 participates in NADPH binding. Residues Lys-192, Asp-245, Ser-255, Arg-256, and Asn-257 each coordinate sn-glycerol 3-phosphate. The Proton acceptor role is filled by Lys-192. Arg-256 serves as a coordination point for NADPH. NADPH is bound by residues Val-280 and Glu-282.

It belongs to the NAD-dependent glycerol-3-phosphate dehydrogenase family.

It localises to the cytoplasm. It catalyses the reaction sn-glycerol 3-phosphate + NAD(+) = dihydroxyacetone phosphate + NADH + H(+). The enzyme catalyses sn-glycerol 3-phosphate + NADP(+) = dihydroxyacetone phosphate + NADPH + H(+). Its pathway is membrane lipid metabolism; glycerophospholipid metabolism. In terms of biological role, catalyzes the reduction of the glycolytic intermediate dihydroxyacetone phosphate (DHAP) to sn-glycerol 3-phosphate (G3P), the key precursor for phospholipid synthesis. The sequence is that of Glycerol-3-phosphate dehydrogenase [NAD(P)+] from Burkholderia ambifaria (strain MC40-6).